The sequence spans 63 residues: Large ribosomal subunit protein uL29 (63 aa).

The protein belongs to the universal ribosomal protein uL29 family.

The protein is Large ribosomal subunit protein uL29 of Stutzerimonas stutzeri (strain A1501) (Pseudomonas stutzeri).